We begin with the raw amino-acid sequence, 163 residues long: Flagellar assembly factor FliW (163 aa).

Positions 136–156 (PFFETSEKKQSGLQRLERQPE) are enriched in basic and acidic residues. The interval 136-163 (PFFETSEKKQSGLQRLERQPEKSVPPAG) is disordered.

Belongs to the FliW family. Interacts with translational regulator CsrA and flagellin(s).

The protein localises to the cytoplasm. Acts as an anti-CsrA protein, binds CsrA and prevents it from repressing translation of its target genes, one of which is flagellin. Binds to flagellin and participates in the assembly of the flagellum. This Geotalea uraniireducens (strain Rf4) (Geobacter uraniireducens) protein is Flagellar assembly factor FliW.